Consider the following 439-residue polypeptide: Enolase 1-1 (439 aa).

A Phosphothreonine modification is found at T85. 2 residues coordinate substrate: H159 and E168. The Proton donor role is filled by E211. D246 contributes to the Mg(2+) binding site. S249 and S250 each carry phosphoserine. Y253 bears the Phosphotyrosine mark. Residues E295 and D320 each contribute to the substrate site. Mg(2+)-binding residues include E295 and D320. The active-site Proton acceptor is K345. A Phosphoserine modification is found at S351. The residue at position 353 (T353) is a Phosphothreonine. Position 355 is a phosphoserine (S355). Residues 372-375 (SHRS) and K396 contribute to the substrate site. S421 bears the Phosphoserine mark.

It belongs to the enolase family. In terms of assembly, homodimer. Requires Mg(2+) as cofactor.

Its subcellular location is the cytoplasm. It carries out the reaction (2R)-2-phosphoglycerate = phosphoenolpyruvate + H2O. The protein operates within carbohydrate degradation; glycolysis; pyruvate from D-glyceraldehyde 3-phosphate: step 4/5. The protein is Enolase 1-1 (eno101) of Schizosaccharomyces pombe (strain 972 / ATCC 24843) (Fission yeast).